The sequence spans 169 residues: Shikimate kinase (169 aa).

Residue 13–18 (GAGKST) coordinates ATP. Residue Ser17 participates in Mg(2+) binding. Residues Asp35, Arg59, and Gly80 each coordinate substrate. Arg117 contacts ATP. Arg136 is a binding site for substrate. Arg153 provides a ligand contact to ATP.

This sequence belongs to the shikimate kinase family. As to quaternary structure, monomer. The cofactor is Mg(2+).

It is found in the cytoplasm. The catalysed reaction is shikimate + ATP = 3-phosphoshikimate + ADP + H(+). The protein operates within metabolic intermediate biosynthesis; chorismate biosynthesis; chorismate from D-erythrose 4-phosphate and phosphoenolpyruvate: step 5/7. Its function is as follows. Catalyzes the specific phosphorylation of the 3-hydroxyl group of shikimic acid using ATP as a cosubstrate. The protein is Shikimate kinase of Corynebacterium efficiens (strain DSM 44549 / YS-314 / AJ 12310 / JCM 11189 / NBRC 100395).